The following is a 1679-amino-acid chain: Furin-like protease 2 (1679 aa).

Residues 1–10 (MSNTTRSSRV) show a composition bias toward polar residues. The segment at 1–42 (MSNTTRSSRVTIGRIGTTPQITDPWSSGLEKQRPSRCGGPKS) is disordered. 3 N-linked (GlcNAc...) asparagine glycosylation sites follow: Asn3, Asn109, and Asn130. The disordered stretch occupies residues 139–164 (VSSLHSSRRTNPPSSSSSSSSNVDVD). The span at 147–160 (RTNPPSSSSSSSSN) shows a compositional bias: low complexity. Asn205 carries N-linked (GlcNAc...) asparagine glycosylation. The 323-residue stretch at 383 to 705 (QWYLNGGAKD…YGLMDAGAMV (323 aa)) folds into the Peptidase S8 domain. Catalysis depends on Asp417, which acts as the Charge relay system. The interval 424-456 (HPDLAQNYDPEASFDINGNDSDPTPQDNGDNKH) is disordered. A compositionally biased stretch (polar residues) spans 439 to 451 (INGNDSDPTPQDN). N-linked (GlcNAc...) asparagine glycosylation occurs at Asn442. Catalysis depends on His456, which acts as the Charge relay system. 2 disulfide bridges follow: Cys473–Cys629 and Cys565–Cys595. An N-linked (GlcNAc...) asparagine glycan is attached at Asn480. The active-site Charge relay system is the Ser637. The 139-residue stretch at 714-852 (VPPQHICKSR…QLIFYGTSTQ (139 aa)) folds into the P/Homo B domain. An intrachain disulfide couples Cys720 to Cys748. Asn927 is a glycosylation site (N-linked (GlcNAc...) asparagine). FU repeat units follow at residues 961 to 1006 (KKIL…RSFP), 1009 to 1056 (VGIC…GYFE), 1060 to 1104 (NRTC…DTYE), 1107 to 1152 (DNKC…GFYA), 1156 to 1204 (RLEC…SEFY), 1208 to 1253 (EGQC…GFFV), 1256 to 1299 (GSLC…GYYS), 1301 to 1346 (RGIC…GFYK), 1348 to 1393 (DFGC…QYYD), and 1396 to 1443 (SATC…QTLA). N-linked (GlcNAc...) asparagine glycosylation occurs at Asn1060. A glycan (N-linked (GlcNAc...) asparagine) is linked at Asn1181. N-linked (GlcNAc...) asparagine glycosylation is found at Asn1274 and Asn1277. Asn1439 is a glycosylation site (N-linked (GlcNAc...) asparagine). A helical transmembrane segment spans residues 1512 to 1532 (AIAVAICLLIITIFSIIFAVL). Over 1533–1679 (QRNSNHVSRN…STTSRTNIRS (147 aa)) the chain is Cytoplasmic. The segment at 1660 to 1679 (TNAERKNHPSSTTSRTNIRS) is disordered. Over residues 1668–1679 (PSSTTSRTNIRS) the composition is skewed to polar residues.

The protein belongs to the peptidase S8 family. Furin subfamily. It depends on Ca(2+) as a cofactor. Transient expression in a subset of central nervous system neurons during embryonic stages 12-13. Expression in developing tracheal tree from stage 13 to end of embryonic development.

The protein resides in the membrane. It carries out the reaction Release of mature proteins from their proproteins by cleavage of -Arg-Xaa-Yaa-Arg-|-Zaa- bonds, where Xaa can be any amino acid and Yaa is Arg or Lys. Releases albumin, complement component C3 and von Willebrand factor from their respective precursors.. Its function is as follows. Furin is likely to represent the ubiquitous endoprotease activity within constitutive secretory pathways and capable of cleavage at the RX(K/R)R consensus motif. This is Furin-like protease 2 (Fur2) from Drosophila melanogaster (Fruit fly).